The following is a 313-amino-acid chain: NADH-ubiquinone oxidoreductase chain 1 (313 aa).

8 helical membrane passes run 5–25 (LFMFVLNFLLLIICVLISVAF), 75–95 (FLYYFSPVFNLMLSLLIWVIF), 104–124 (FPYGFYFLCCTSLSVYTFMIA), 151–171 (LALILLSLIILIGSFNMLYFM), 175–195 (LYCWFIVFSFPLALSFFGSSL), 227–247 (LIFLAEYSSIIFMSMLFSLIF), 251–271 (DFYSFYFFFKLSLVSFFFVWV), and 293–313 (PLSLNFLFFFIGLSVMFFSII).

Belongs to the complex I subunit 1 family.

The protein resides in the mitochondrion inner membrane. The catalysed reaction is a ubiquinone + NADH + 5 H(+)(in) = a ubiquinol + NAD(+) + 4 H(+)(out). In terms of biological role, core subunit of the mitochondrial membrane respiratory chain NADH dehydrogenase (Complex I) that is believed to belong to the minimal assembly required for catalysis. Complex I functions in the transfer of electrons from NADH to the respiratory chain. The immediate electron acceptor for the enzyme is believed to be ubiquinone. This chain is NADH-ubiquinone oxidoreductase chain 1 (ND1), found in Locusta migratoria (Migratory locust).